The following is a 536-amino-acid chain: MNFTESMNVVHARIQQLEPENAAKIFGYLLLMQENGNRDMIRLAFCPDSVMCSVINCVKYELARNSHHYHSPPSDHIPTPKFGSFTGSSPLSVSVSPPMKTGFWENSTEMDTLQNNLQFLNFEDPLTSPEFSNGFFSQERQCLPLRTSRRSPSLPEFPVKICHYFNKGFCKHGNNCRYFHGQIIPERESFAQMFNPNNNLSDEEHVVSPVSLEKLEGEIIELLKLRRGAPISIASLPMMYYEKYGRTLQAEGYLTESQRHGKAGYSLTKLLARLKNTIRLVDRPHGQHSVILAEDASKFVEYTGERNEHGAILAGSRQIYLTFPAESSFTEHDVSIYFTSYGHVEDVRIPCQQKRMYGFVTFASSETVKHILAKGNPHFICNARVLVKPYREKSRSSRYLDNYKPLHGMRYGSKFIERDIEMNTLPPRVSESSRMRKPFLSEPEQSVSKSLPTNYSYLGFSSDDFKLTSNAEQEEQAERLSYLLDYLNTEDNVMNITTNYRDNDRRTHCESLDSQVLNLPESPFSSLSGKEISTVT.

Residues 156-183 (EFPVKICHYFNKGFCKHGNNCRYFHGQI) form a C3H1-type zinc finger. An HTH OST-type domain is found at 211–294 (SLEKLEGEII…HGQHSVILAE (84 aa)). Positions 317-392 (RQIYLTFPAE…ARVLVKPYRE (76 aa)) constitute an RRM domain.

Possesses ribonuclease activity in vitro. In Arabidopsis thaliana (Mouse-ear cress), this protein is Zinc finger CCCH domain-containing protein 18.